Here is a 275-residue protein sequence, read N- to C-terminus: 2,3,4,5-tetrahydropyridine-2,6-dicarboxylate N-succinyltransferase (275 aa).

Positions 104 and 141 each coordinate substrate.

It belongs to the transferase hexapeptide repeat family. In terms of assembly, homotrimer.

The protein localises to the cytoplasm. It catalyses the reaction (S)-2,3,4,5-tetrahydrodipicolinate + succinyl-CoA + H2O = (S)-2-succinylamino-6-oxoheptanedioate + CoA. The protein operates within amino-acid biosynthesis; L-lysine biosynthesis via DAP pathway; LL-2,6-diaminopimelate from (S)-tetrahydrodipicolinate (succinylase route): step 1/3. In Haemophilus influenzae (strain PittEE), this protein is 2,3,4,5-tetrahydropyridine-2,6-dicarboxylate N-succinyltransferase.